The following is a 431-amino-acid chain: 3'3'-cGAMP-specific phosphodiesterase 1 (431 aa).

The 117-residue stretch at 39-155 (DINHGHRVGY…IFLADRVDYL (117 aa)) folds into the HD domain. The 197-residue stretch at 231 to 427 (GVEEIMSIAM…YYQLSIAESP (197 aa)) folds into the HD-GYP domain. H288 and D289 together coordinate a divalent metal cation. K292 functions as the Proton donor in the catalytic mechanism. The a divalent metal cation site is built by H317, H341, H342, and D370.

Monomer. Ca(2+) is required as a cofactor. Mg(2+) serves as cofactor.

It catalyses the reaction 3',3'-cGAMP + H2O = 5'-pApG-3' + H(+). The enzyme catalyses 5'-pApG-3' + H2O = 5'-ApG-3' + phosphate. Phosphodiesterase (PDE) that catalyzes the hydrolysis of 3'3'-cyclic GMP-AMP (3'3'-cGAMP), leading to linear 5'-pApG. Also displays 5'-nucleotidase activity, further hydrolyzing 5'-pApG to 5'-ApG. Counteracts the function of the 3'3'-cGAMP synthase DncV, and is involved in the modulation of intracellular 3'3'-cGAMP levels. Enhances bacterial chemotaxis and inhibits intestinal colonization in vivo. Thus exerts a crucial role in regulating bacterial infectivity through catalyzing 3'3'-cGAMP degradation. Is specific for 3'3'-cGAMP since it cannot degrade other cGAMP linkage isomers (3'2'-, 2'3'-, and 2'2'-cGAMPs). Is also able to hydrolyze c-di-GMP but not c-di-AMP. This chain is 3'3'-cGAMP-specific phosphodiesterase 1, found in Vibrio cholerae serotype O1 (strain ATCC 39315 / El Tor Inaba N16961).